We begin with the raw amino-acid sequence, 303 residues long: tRNA pseudouridine synthase-like 1 (303 aa).

The active-site Nucleophile is Asp-66. Position 84 is a phosphoserine (Ser-84). Substrate is bound at residue Tyr-130.

It belongs to the tRNA pseudouridine synthase TruA family.

It catalyses the reaction a uridine in tRNA = a pseudouridine in tRNA. The protein is tRNA pseudouridine synthase-like 1 (PUSL1) of Homo sapiens (Human).